A 407-amino-acid chain; its full sequence is MVKETKLYEVLNVDVTASQAELKKAYRKLALKYHPDKNPNAGDKFKEISRAYEILADEEKRATYDRFGEEGLQGGGADGGMSADDLFASFFGGGMFGGGMPRGPRKGKDLVHTIKVTLEDLYRGKTTKLALQKKVICPKCSGRGGKEGSVKSCASCNGSGVKFITRAMGPMIQRMQMTCPDCNGAGETIRDEDRCKECDGAKVISQRKILTVHVEKGMHNGQKIVFKEEGEQAPGIIPGDVIFVIDQKEHPRFKRSGDHLFYEAHVDLLTALAGGQIVVEHLDDRWLTIPIIPGECIRPNELKVLPGQGMLSQRHHQPGNLYIRFHVDFPEPNFATPEQLALLEKALPPRKIESAPKNAHTEECVLATVDPTEKVRIDNNVDPTTATSMDEDEDEEGGHPGVQCAQQ.

The J domain maps to 6–68; sequence KLYEVLNVDV…EKRATYDRFG (63 aa). Substrate contacts are provided by residues Leu-110 and 129–131; that span reads LAL. The segment at 124 to 207 adopts a CR-type zinc-finger fold; the sequence is GKTTKLALQK…CDGAKVISQR (84 aa). Zn(2+)-binding residues include Cys-137, Cys-140, Cys-153, Cys-156, Cys-179, Cys-182, Cys-195, and Cys-198. CXXCXGXG motif repeat units follow at residues 137-144, 153-160, 179-186, and 195-202; these read CPKCSGRG, CASCNGSG, CPDCNGAG, and CKECDGAK. Substrate is bound by residues 209 to 210 and 241 to 243; these read IL and VIF. The interval 375-407 is disordered; the sequence is VRIDNNVDPTTATSMDEDEDEEGGHPGVQCAQQ. Position 404 is a cysteine methyl ester (Cys-404). The S-farnesyl cysteine moiety is linked to residue Cys-404. A propeptide spans 405-407 (removed in mature form); it reads AQQ.

In terms of assembly, homodimer.

Its subcellular location is the cytoplasm. The protein resides in the nucleus. Its function is as follows. Probably involved in mitochondrial protein import. Plays a role in microtubule cytoskeleton organization. The sequence is that of Mitochondrial protein import protein mas5 (mas5) from Schizosaccharomyces pombe (strain 972 / ATCC 24843) (Fission yeast).